The following is a 338-amino-acid chain: Glyceraldehyde-3-phosphate dehydrogenase (338 aa).

Residues 12 to 13, Asp-34, and Arg-79 contribute to the NAD(+) site; that span reads RI. Residues 150–152, Thr-181, 210–211, and Arg-233 contribute to the D-glyceraldehyde 3-phosphate site; these read SCT and TG. The active-site Nucleophile is Cys-151. Asn-315 contacts NAD(+).

It belongs to the glyceraldehyde-3-phosphate dehydrogenase family. As to quaternary structure, homotetramer.

The protein resides in the cytoplasm. The catalysed reaction is D-glyceraldehyde 3-phosphate + phosphate + NAD(+) = (2R)-3-phospho-glyceroyl phosphate + NADH + H(+). It functions in the pathway carbohydrate degradation; glycolysis; pyruvate from D-glyceraldehyde 3-phosphate: step 1/5. The chain is Glyceraldehyde-3-phosphate dehydrogenase (gpd1) from Hypocrea atroviridis (Trichoderma atroviride).